Reading from the N-terminus, the 382-residue chain is Chorismate synthase (382 aa).

Residues arginine 39 and arginine 45 each contribute to the NADP(+) site. Residues 128 to 130, 246 to 247, alanine 290, 305 to 309, and arginine 331 contribute to the FMN site; these read RAS, QA, and KPIAT.

It belongs to the chorismate synthase family. In terms of assembly, homotetramer. The cofactor is FMNH2.

It catalyses the reaction 5-O-(1-carboxyvinyl)-3-phosphoshikimate = chorismate + phosphate. It functions in the pathway metabolic intermediate biosynthesis; chorismate biosynthesis; chorismate from D-erythrose 4-phosphate and phosphoenolpyruvate: step 7/7. Its function is as follows. Catalyzes the anti-1,4-elimination of the C-3 phosphate and the C-6 proR hydrogen from 5-enolpyruvylshikimate-3-phosphate (EPSP) to yield chorismate, which is the branch point compound that serves as the starting substrate for the three terminal pathways of aromatic amino acid biosynthesis. This reaction introduces a second double bond into the aromatic ring system. The protein is Chorismate synthase of Deinococcus geothermalis (strain DSM 11300 / CIP 105573 / AG-3a).